The sequence spans 2083 residues: Non-reducing polyketide synthase curS2 (2083 aa).

An N-terminal acylcarrier protein transacylase domain (SAT) region spans residues 9 to 246 (LLFGDVTDPW…NELDIHALQH (238 aa)). Positions 366–798 (RDGIAIVGMA…GGNACLLLED (433 aa)) constitute a Ketosynthase family 3 (KS3) domain. Residues Cys-543, His-678, and His-717 each act as for beta-ketoacyl synthase activity in the active site. Positions 895–1201 (VFVFTGQGSH…THTLQPNTHN (307 aa)) are malonyl-CoA:ACP transacylase (MAT) domain. The active-site For acyl/malonyl transferase activity is Ser-986. An N-terminal hotdog fold region spans residues 1276–1415 (AQYLVSKSSS…DPAKTQADWD (140 aa)). Residues 1276–1585 (AQYLVSKSSS…YQELPRVTWK (310 aa)) enclose the PKS/mFAS DH domain. The product template (PT) domain stretch occupies residues 1285 to 1581 (SPKVQVVFRA…IDLRYQELPR (297 aa)). The C-terminal hotdog fold stretch occupies residues 1437 to 1585 (GHRMQPEVFY…YQELPRVTWK (149 aa)). Positions 1637 to 1714 (DFDEGLVDAI…DLRRAFGANK (78 aa)) constitute a Carrier domain. O-(pantetheine 4'-phosphoryl)serine is present on Ser-1674. A disordered region spans residues 1710–1790 (FGANKPKTSK…KMDETDTSPA (81 aa)). A compositionally biased stretch (low complexity) spans 1718–1736 (SKPQPGSTTPSSSQSSIPS). Residues 1745-1754 (MSDTASSLGS) show a composition bias toward polar residues. Residues 1771 to 1784 (LEPKPNHHLGKMDE) are compositionally biased toward basic and acidic residues. The tract at residues 1811-2058 (MMADGTGTIA…LSVAGDHLDL (248 aa)) is thioesterase (TE) domain. The For thioesterase activity role is filled by His-2065.

It participates in mycotoxin biosynthesis. Functionally, non-reducing polyketide synthase; part of the gene cluster that mediates the biosynthesis of 10,11-dehydrocurvularin, a prevalent fungal phytotoxin with heat shock response and immune-modulatory activities. The highly reducing polyketide synthase curS1 is responsible for biosynthesis up to the tetraketide stage. The non-reducing polyketide synthase curS2 then conducts four additional chain extension cycles, producing the unreduced part of the nascent octaketide from C-1 to C-8 in 10,11-dehydrocurvularin. The sequence is that of Non-reducing polyketide synthase curS2 from Aspergillus terreus.